A 101-amino-acid chain; its full sequence is MKRRSHSVNLGKTKHKPEETCQAFEDISKYFSKEEWKKLSRSEKITYVYMKRNYTTMTNLGLRAHLPDFMESKERVTKSVLSDSDEVSSHESQDKRKNPVV.

A KRAB-related domain is found at 19-83 (ETCQAFEDIS…ERVTKSVLSD (65 aa)). Residues 73–101 (KERVTKSVLSDSDEVSSHESQDKRKNPVV) form a disordered region. A compositionally biased stretch (basic and acidic residues) spans 87-101 (VSSHESQDKRKNPVV).

Belongs to the SSX family. As to expression, specifically expressed in testis (at protein level). Not detected in other tissues tested (at protein level).

The protein resides in the nucleus. Its function is as follows. Could act as a modulator of transcription. In Mus musculus (Mouse), this protein is Protein SSXA1.